Reading from the N-terminus, the 232-residue chain is UPF0502 protein mma_2112 (232 aa).

Belongs to the UPF0502 family.

This chain is UPF0502 protein mma_2112, found in Janthinobacterium sp. (strain Marseille) (Minibacterium massiliensis).